The following is a 638-amino-acid chain: uncharacterized protein (638 aa).

The N-terminal stretch at 1–31 (MKFIKFNDSTIDSFLFMMLTDLAKTLTKSEA) is a signal peptide. Basic and acidic residues-rich tracts occupy residues 247–256 (EEKKAPKLSD), 273–284 (EEMPTWHRETEA), 301–310 (DLGKDASREG), and 329–342 (RKDY…ESQK). Disordered regions lie at residues 247–285 (EEKK…TEAP) and 301–354 (DLGK…ADGK). The VWFA domain occupies 445–632 (FTLLVDCSAS…DVLYPLLKKL (188 aa)).

This is an uncharacterized protein from Bacillus subtilis (strain 168).